The following is a 445-amino-acid chain: Histidinol dehydrogenase (445 aa).

Residues Tyr-144, Gln-205, and Asn-228 each coordinate NAD(+). Substrate-binding residues include Ser-251, Gln-273, and His-276. 2 residues coordinate Zn(2+): Gln-273 and His-276. Residues Glu-341 and His-342 each act as proton acceptor in the active site. 4 residues coordinate substrate: His-342, Asp-375, Glu-429, and His-434. Asp-375 contributes to the Zn(2+) binding site. Zn(2+) is bound at residue His-434.

The protein belongs to the histidinol dehydrogenase family. Zn(2+) serves as cofactor.

It catalyses the reaction L-histidinol + 2 NAD(+) + H2O = L-histidine + 2 NADH + 3 H(+). The protein operates within amino-acid biosynthesis; L-histidine biosynthesis; L-histidine from 5-phospho-alpha-D-ribose 1-diphosphate: step 9/9. Its function is as follows. Catalyzes the sequential NAD-dependent oxidations of L-histidinol to L-histidinaldehyde and then to L-histidine. The sequence is that of Histidinol dehydrogenase from Cupriavidus pinatubonensis (strain JMP 134 / LMG 1197) (Cupriavidus necator (strain JMP 134)).